The following is a 216-amino-acid chain: 3-keto-L-gulonate-6-phosphate decarboxylase UlaD (216 aa).

Position 11 (Asp11) interacts with substrate. Residues Glu33 and Asp62 each contribute to the Mg(2+) site. Arg192 contributes to the substrate binding site.

Belongs to the HPS/KGPDC family. KGPDC subfamily. Homodimer. Mg(2+) serves as cofactor.

The enzyme catalyses 3-dehydro-L-gulonate 6-phosphate + H(+) = L-xylulose 5-phosphate + CO2. Its pathway is cofactor degradation; L-ascorbate degradation; D-xylulose 5-phosphate from L-ascorbate: step 2/4. Catalyzes the decarboxylation of 3-keto-L-gulonate-6-P into L-xylulose-5-P. Is involved in the anaerobic L-ascorbate utilization. This chain is 3-keto-L-gulonate-6-phosphate decarboxylase UlaD, found in Escherichia fergusonii (strain ATCC 35469 / DSM 13698 / CCUG 18766 / IAM 14443 / JCM 21226 / LMG 7866 / NBRC 102419 / NCTC 12128 / CDC 0568-73).